The chain runs to 403 residues: Acetyl-CoA acetyltransferase IA (403 aa).

The active-site Acyl-thioester intermediate is the Cys91. Active-site proton acceptor residues include His353 and Cys383. Residues 401-403 (AKL) carry the Microbody targeting signal motif.

Belongs to the thiolase-like superfamily. Thiolase family. Multimeric.

It localises to the peroxisome. It catalyses the reaction 2 acetyl-CoA = acetoacetyl-CoA + CoA. Its pathway is metabolic intermediate biosynthesis; (R)-mevalonate biosynthesis; (R)-mevalonate from acetyl-CoA: step 1/3. The polypeptide is Acetyl-CoA acetyltransferase IA (PACTA) (Candida tropicalis (Yeast)).